We begin with the raw amino-acid sequence, 591 residues long: Splicing factor U2af large subunit A (591 aa).

The disordered stretch occupies residues 1–215 (MAEHDAPPES…QSKRMSGFDQ (215 aa)). The span at 27–36 (SPQQDAQPLS) shows a compositional bias: polar residues. Composition is skewed to basic and acidic residues over residues 37 to 79 (SRDR…SRDR) and 157 to 191 (RERS…DRDG). 2 consecutive RRM domains span residues 272-355 (RRVY…RPTD) and 392-470 (DRIF…RANQ).

This sequence belongs to the splicing factor SR family.

The protein localises to the nucleus. Functionally, necessary for the splicing of pre-mRNA. This Triticum aestivum (Wheat) protein is Splicing factor U2af large subunit A (U2AF65A).